A 210-amino-acid polypeptide reads, in one-letter code: Na(+)-translocating NADH-quinone reductase subunit D (210 aa).

6 helical membrane passes run Pro-14–Val-34, Leu-42–Leu-62, Ile-72–Ala-92, Val-103–Met-123, Phe-131–Ile-151, and Asn-178–Ile-198.

Belongs to the NqrDE/RnfAE family. As to quaternary structure, composed of six subunits; NqrA, NqrB, NqrC, NqrD, NqrE and NqrF.

It is found in the cell inner membrane. The catalysed reaction is a ubiquinone + n Na(+)(in) + NADH + H(+) = a ubiquinol + n Na(+)(out) + NAD(+). Its function is as follows. NQR complex catalyzes the reduction of ubiquinone-1 to ubiquinol by two successive reactions, coupled with the transport of Na(+) ions from the cytoplasm to the periplasm. NqrA to NqrE are probably involved in the second step, the conversion of ubisemiquinone to ubiquinol. This is Na(+)-translocating NADH-quinone reductase subunit D from Shewanella halifaxensis (strain HAW-EB4).